The following is a 170-amino-acid chain: Photosystem II extrinsic protein V (170 aa).

An N-terminal signal peptide occupies residues 1–33 (MVSVFSSLRQSFKGLLVLVPVLIGLAFISPAEA). 4 residues coordinate heme c: C70, C73, H74, and M137.

Belongs to the cytochrome c family. PsbV subfamily. As to quaternary structure, PSII is composed of 1 copy each of membrane proteins PsbA, PsbB, PsbC, PsbD, PsbE, PsbF, PsbH, PsbI, PsbJ, PsbK, PsbL, PsbM, PsbT, PsbX, PsbY, PsbZ, Psb30/Ycf12, peripheral proteins PsbO, CyanoQ (PsbQ), PsbU, PsbV and a large number of cofactors. It forms dimeric complexes. Heme c is required as a cofactor.

The protein localises to the cellular thylakoid membrane. Its function is as follows. One of the extrinsic, lumenal subunits of photosystem II (PSII). PSII is a light-driven water plastoquinone oxidoreductase, using light energy to abstract electrons from H(2)O, generating a proton gradient subsequently used for ATP formation. The extrinsic proteins stabilize the structure of photosystem II oxygen-evolving complex (OEC), the ion environment of oxygen evolution and protect the OEC against heat-induced inactivation. Low-potential cytochrome c that plays a role in the OEC of PSII. The protein is Photosystem II extrinsic protein V of Synechococcus sp. (strain CC9902).